Reading from the N-terminus, the 385-residue chain is Chorismate synthase (385 aa).

The segment at 43-63 (PDLDRRRPGTSRHVTQRNEPD) is disordered. Residues Arg-48 and Arg-54 each contribute to the NADP(+) site. FMN is bound by residues 125-127 (RSS), 238-239 (NA), Gly-278, 293-297 (KPTSS), and Arg-319. The segment covering 363-372 (AQAPRTETAP) has biased composition (low complexity). Positions 363–385 (AQAPRTETAPATPPLDAGDDIEA) are disordered.

Belongs to the chorismate synthase family. As to quaternary structure, homotetramer. Requires FMNH2 as cofactor.

The catalysed reaction is 5-O-(1-carboxyvinyl)-3-phosphoshikimate = chorismate + phosphate. Its pathway is metabolic intermediate biosynthesis; chorismate biosynthesis; chorismate from D-erythrose 4-phosphate and phosphoenolpyruvate: step 7/7. Functionally, catalyzes the anti-1,4-elimination of the C-3 phosphate and the C-6 proR hydrogen from 5-enolpyruvylshikimate-3-phosphate (EPSP) to yield chorismate, which is the branch point compound that serves as the starting substrate for the three terminal pathways of aromatic amino acid biosynthesis. This reaction introduces a second double bond into the aromatic ring system. The chain is Chorismate synthase from Leptothrix cholodnii (strain ATCC 51168 / LMG 8142 / SP-6) (Leptothrix discophora (strain SP-6)).